Consider the following 93-residue polypeptide: Acylphosphatase (93 aa).

The 89-residue stretch at 5–93 folds into the Acylphosphatase-like domain; sequence TAILRVTGFV…EDRKTFDIVY (89 aa). Catalysis depends on residues arginine 20 and asparagine 38.

This sequence belongs to the acylphosphatase family.

The catalysed reaction is an acyl phosphate + H2O = a carboxylate + phosphate + H(+). The chain is Acylphosphatase (acyP) from Listeria welshimeri serovar 6b (strain ATCC 35897 / DSM 20650 / CCUG 15529 / CIP 8149 / NCTC 11857 / SLCC 5334 / V8).